The sequence spans 345 residues: Nuclear distribution protein nudE-like 1 (345 aa).

Residues 28 to 190 are a coiled coil; that stretch reads QSFQEARDEL…LAVRERQQEV (163 aa). A self-association region spans residues 56 to 166; sequence VQAEQRNRDL…LDEKESLLVS (111 aa). The tract at residues 64–189 is interaction with KATNB1; the sequence is DLQADNQRLK…ELAVRERQQE (126 aa). A required for interaction with PAFAH1B1 region spans residues 114–133; it reads YVRELEQANDDLERAKRATI. The interval 175 to 345 is interaction with CENPF; sequence RDLRQELAVR…SAPGMLPLSV (171 aa). Positions 189–256 are interaction with YWHAE; it reads EVTRKSAPSS…SARISALNIV (68 aa). Positions 191–345 are interaction with NEFL; the sequence is TRKSAPSSPT…SAPGMLPLSV (155 aa). An interaction with KATNA1 region spans residues 195 to 256; the sequence is APSSPTLDCE…SARISALNIV (62 aa). At Ser215 the chain carries Phosphoserine. Position 219 is a phosphothreonine; by CDK1 and MAPK1 (Thr219). Ser231 bears the Phosphoserine mark. The tract at residues 241-280 is interaction with DISC1; it reads TSPLTPSARISALNIVGDLLRKVGALESKLAACRNFAKDQ. At Ser242 the chain carries Phosphoserine; by CDK1. At Thr245 the chain carries Phosphothreonine; by CDK1 and MAPK1. Positions 256–291 are required for localization to the centrosome and interaction with dynein, dynactin, tubulin gamma, PCM1 and PCNT; sequence VGDLLRKVGALESKLAACRNFAKDQASRKSYISGNV. Cys273 is lipidated: S-palmitoyl cysteine; by ZDHHC2, ZDHHC3 and ZDHHC7. The interval 315–345 is disordered; the sequence is GAVNGFDPAPPPPGLGSSRPSSAPGMLPLSV. The span at 329 to 339 shows a compositional bias: low complexity; it reads LGSSRPSSAPG. Ser344 bears the Phosphoserine mark.

Belongs to the nudE family. Self-associates. Interacts with DISC1, dynein, dynactin, tubulin gamma, KATNA1, KATNB1, microtubules, PAFAH1B1, PCM1, PCNT, and YWHAE. Interacts directly with NEFL and indirectly with NEFH. Interacts (via C-terminus) with CENPF. Interacts with ZNF365. Interacts with PLEKHM1 (via N- and C-terminus). Interacts with GTP-bound RAB9A; the interaction may lead to RAB9A-dynein motor tethering. Phosphorylated in mitosis. Can be phosphorylated by CDK1, CDK5 and MAPK1. Phosphorylation by CDK5 promotes interaction with KATNA1 and YWHAE. In terms of processing, palmitoylation at Cys-273 reduces affinity for dynein.

The protein localises to the cytoplasm. It is found in the cytoskeleton. Its subcellular location is the microtubule organizing center. It localises to the centrosome. The protein resides in the chromosome. The protein localises to the centromere. It is found in the kinetochore. Its subcellular location is the spindle. Functionally, required for organization of the cellular microtubule array and microtubule anchoring at the centrosome. May regulate microtubule organization at least in part by targeting the microtubule severing protein KATNA1 to the centrosome. Also positively regulates the activity of the minus-end directed microtubule motor protein dynein. May enhance dynein-mediated microtubule sliding by targeting dynein to the microtubule plus ends. Required for several dynein- and microtubule-dependent processes such as the maintenance of Golgi integrity, the centripetal motion of secretory vesicles and the coupling of the nucleus and centrosome. Also required during brain development for the migration of newly formed neurons from the ventricular/subventricular zone toward the cortical plate. Plays a role, together with DISC1, in the regulation of neurite outgrowth. Required for mitosis in some cell types but appears to be dispensible for mitosis in cortical neuronal progenitors, which instead requires NDE1. Facilitates the polymerization of neurofilaments from the individual subunits NEFH and NEFL. Positively regulates lysosome peripheral distribution and ruffled border formation in osteoclasts. Plays a role, together with DISC1, in the regulation of neurite outgrowth. May act as a RAB9A/B effector that tethers RAB9-associated late endosomes to the dynein motor for their retrograde transport to the trans-Golgi network. This chain is Nuclear distribution protein nudE-like 1 (NDEL1), found in Pongo abelii (Sumatran orangutan).